A 553-amino-acid polypeptide reads, in one-letter code: 3-amino-2-hydroxy-4-methoxybenzoate diazotase (553 aa).

Low complexity predominate over residues 157-167; the sequence is ALPAAGATGPA. Residues 157-178 are disordered; the sequence is ALPAAGATGPAREGDAPPPAPV.

This sequence belongs to the ATP-dependent AMP-binding enzyme family.

The catalysed reaction is 3-amino-2-hydroxy-4-methoxybenzoate + nitrite + ATP = cremeomycin + AMP + diphosphate + H2O. It functions in the pathway antibiotic biosynthesis. Its function is as follows. Part of a gene cluster involved in the biosynthesis of cremeomycin, a light-sensitive o-diazoquinone with antibacterial and antiproliferative effects. Catalyzes the last step of cremeomycin biosynthesis, the diazotization of 3-amino-2-hydroxy-4-methoxybenzoate (3,2,4-AHMBA) with nitrite to generate cremeomycin. The sequence is that of 3-amino-2-hydroxy-4-methoxybenzoate diazotase from Streptomyces cremeus.